A 418-amino-acid polypeptide reads, in one-letter code: Centromere protein U (418 aa).

Residues 1-11 show a composition bias toward basic residues; sequence MAPRGRRRPRP. A disordered region spans residues 1 to 76; sequence MAPRGRRRPR…TYETFDPPLH (76 aa). Residues 6-23 carry the Nuclear localization signal motif; the sequence is RRRPRPHRSEGARRSKNT. The segment covering 12–42 has biased composition (basic and acidic residues); the sequence is HRSEGARRSKNTLERTHSMKDKAGQKCKPID. T78 carries the phosphothreonine; by PLK1 modification. Residues 88 to 227 are disordered; that stretch reads SKHCGLSLSS…KRKKSRSKAI (140 aa). T98 carries the phosphothreonine modification. S108 is subject to Phosphoserine. T110 carries the phosphothreonine modification. Residues S111, S116, and S120 each carry the phosphoserine modification. Residues 124-133 are compositionally biased toward basic residues; that stretch reads SAKKPGRKLR. Phosphoserine is present on residues S136, S139, and S141. Residues 145–165 are compositionally biased toward basic and acidic residues; it reads SDTRRKVKSAEKISTQRHEVI. A compositionally biased stretch (polar residues) spans 180–193; the sequence is SVTSKKTGPLSAQP. Residue K185 forms a Glycyl lysine isopeptide (Lys-Gly) (interchain with G-Cter in SUMO2) linkage. S190 and S194 each carry phosphoserine. The span at 208 to 224 shows a compositional bias: basic residues; that stretch reads TQKKGKISHDKRKKSRS. Phosphoserine is present on S232. Coiled-coil stretches lie at residues 297–356 and 397–417; these read QMLT…NAAY and LLGA…LLDQ. The Nuclear localization signal signature appears at 303–320; that stretch reads KRKNAKMISDIEKKRQRM.

This sequence belongs to the CENP-U/AME1 family. Component of the CENPA-NAC complex, at least composed of CENPA, CENPC, CENPH, CENPM, CENPN, CENPT and CENPU. The CENPA-NAC complex interacts with the CENPA-CAD complex, composed of CENPI, CENPK, CENPL, CENPO, CENPP, CENPQ, CENPR and CENPS. Interacts with MLF1. Interacts with PLK1. As to quaternary structure, (Microbial infection) Interacts with the N-terminal domain of Kaposi's sarcoma-associated herpesvirus latent nuclear antigen (LNA). In terms of processing, phosphorylated by PLK1 at Thr-78, creating a self-tethering site that specifically interacts with the polo-box domain of PLK1. Expressed at high levels in the testis, fetal liver, thymus, bone marrow and at lower levels in the lymph nodes, placenta, colon and spleen. Present in all cell lines examined, including B-cells, T-cells, epithelial cells and fibroblast cells. Expressed at high levels in glioblastoma cell lines.

The protein resides in the cytoplasm. Its subcellular location is the nucleus. It is found in the chromosome. It localises to the centromere. The protein localises to the kinetochore. In terms of biological role, component of the CENPA-NAC (nucleosome-associated) complex, a complex that plays a central role in assembly of kinetochore proteins, mitotic progression and chromosome segregation. The CENPA-NAC complex recruits the CENPA-CAD (nucleosome distal) complex and may be involved in incorporation of newly synthesized CENPA into centromeres. Plays an important role in the correct PLK1 localization to the mitotic kinetochores. A scaffold protein responsible for the initial recruitment and maintenance of the kinetochore PLK1 population until its degradation. Involved in transcriptional repression. This chain is Centromere protein U (CENPU), found in Homo sapiens (Human).